A 236-amino-acid polypeptide reads, in one-letter code: MARRYWNINLEEMLEAGVHFGHGTRKWNPRMAPYISAKRKGIHITNLTRTARFLSEACDLVFDAASKGKQFLIVGTKNKAADSVARAAIRARCHYVNKKWLGGMLTNWPTTETRLHKFRDLRTEQKTGGLNRLPKRDAAMLKRQLSRLQTYLGGIKYMTRLPDIVIIVDQQEEYTALRECITLGIPTICLIDTNSDPDLADISIPANDDAIASIRLILNKLVVAICEGRSSYIRNP.

This sequence belongs to the universal ribosomal protein uS2 family.

The protein resides in the plastid. Its subcellular location is the chloroplast. This chain is Small ribosomal subunit protein uS2c (rps2), found in Gossypium barbadense (Sea Island cotton).